Reading from the N-terminus, the 331-residue chain is UPF0324 membrane protein SAS0317 (331 aa).

The next 11 membrane-spanning stretches (helical) occupy residues 9–26, 31–48, 69–88, 93–115, 122–144, 154–176, 183–202, 217–234, 247–269, 273–295, and 308–330; these read FMIG…SFLA, ILDK…AILY, LLRF…DIIG, LLAI…NKLL, ALLL…APIF, SIGI…YAIF, YGAW…LAGG, LGRV…ILIM, ISIP…VTIP, LNIL…GLNV, and LMTI…HWLY.

The protein belongs to the UPF0324 family.

It localises to the cell membrane. This is UPF0324 membrane protein SAS0317 from Staphylococcus aureus (strain MSSA476).